Consider the following 739-residue polypeptide: Prestin (739 aa).

Residues 1–76 (MEHVTVSEEP…PILTWLPSYP (76 aa)) are Cytoplasmic-facing. Residues 77-106 (LKEYLFGDIVSGISTGVMQLPQGLAYAMLA) traverse the membrane as a helical segment. Topologically, residues 107–109 (AVP) are extracellular. The chain crosses the membrane as a helical span at residues 110–127 (PVFGLYSSFYPVLLYTFF). At 128-138 (GTSKHISIGTF) the chain is on the cytoplasmic side. The helical transmembrane segment at 139–152 (AVISLMIGGVAVRE) threads the bilayer. Residues 153-169 (APDSMFMVNGTNSSLVV) are Extracellular-facing. N-linked (GlcNAc...) asparagine glycosylation is found at Asn-161 and Asn-164. Residues 170 to 199 (NIEARDSRRVEVVVALTTLVGIIQFVLGLL) traverse the membrane as a helical segment. Topologically, residues 200-209 (RFGFLAIYLT) are cytoplasmic. Residues 210–233 (EPLVRGFTTAAAVHVSVSQLKYLL) traverse the membrane as a helical segment. The Extracellular portion of the chain corresponds to 234-244 (GVKTARFNGPL). The segment at residues 245–256 (SVVYSLDAVLRN) is an intramembrane region (helical). Residues 257–261 (IADTN) are Extracellular-facing. A helical transmembrane segment spans residues 262–285 (IVTLIIGLGCTVFLYIIKQLNERF). The Cytoplasmic segment spans residues 286 to 294 (KKKLLIPIP). The helical transmembrane segment at 295 to 310 (GEIIVVIVSTGISYGM) threads the bilayer. The Extracellular portion of the chain corresponds to 311-335 (LMSENYGVDVVGKIPTGLLPPKVPD). A helical membrane pass occupies residues 336-370 (FSVFPNLFADAVPIAVVGFSITISLAKTFALKYGY). The Cytoplasmic portion of the chain corresponds to 371 to 373 (SVD). A helical membrane pass occupies residues 374 to 391 (GNQELIALGLCNFVSSFF). At 392 to 399 (HTFVVTAS) the chain is on the extracellular side. Residues 400 to 409 (MSRSLVQEST) form a helical membrane-spanning segment. Residue Ser-401 coordinates salicylate. Over 410 to 413 (GGHT) the chain is Cytoplasmic. The chain crosses the membrane as a helical span at residues 414–435 (EIAGLLASLLVLLVVVAIGFVF). Residues 436–439 (QPLP) are Extracellular-facing. A helical transmembrane segment spans residues 440–467 (TTVLAAIIMVNLLGMFKQTRDIPVLWRK). Position 468 (Ser-468) is a topological domain, cytoplasmic. A helical transmembrane segment spans residues 469–484 (KIELAIWLVSFFASVL). Topologically, residues 485-486 (LG) are extracellular. The chain crosses the membrane as a helical span at residues 487–507 (LDYGLAVAMAFAILTVIYRTQ). The extended region for STAS domain stretch occupies residues 508-731 (RPKNVVLGQI…AVLQCKRWRD (224 aa)). At 508-739 (RPKNVVLGQI…RDLPVHPNIH (232 aa)) the chain is on the cytoplasmic side. Positions 528-726 (EYEEAEECSG…PTIHDAVLQC (199 aa)) constitute an STAS domain.

This sequence belongs to the SLC26A/SulP transporter (TC 2.A.53) family. As to quaternary structure, homodimer. Interacts (via STAS domain) with CALM; this interaction is calcium-dependent. Expressed in hair cells of the auditory organs.

It is found in the cell membrane. It catalyses the reaction oxalate(in) + chloride(out) = oxalate(out) + chloride(in). The catalysed reaction is sulfate(out) + chloride(in) = sulfate(in) + chloride(out). With respect to regulation, sulfate/chloride antiport activity is inhibited by salicylate; this inhibition is reversible. Its function is as follows. Electrogenic antiporter that exchanges sulfate or oxalate for chloride ion in a strictly coupled manner with a 1:1 stoichiometry. Adopts a dynamic conformation, which alternates between the exposure of the central binding site to the extra- and intracellular solutions leading to an inward-to-outward conformational transition during the transport cycle. Generates voltage-dependent charge movements resembling to the non-linear capacitance (NLC) of the cell membrane, but which are not associated to electromotile activity. In Danio rerio (Zebrafish), this protein is Prestin.